A 230-amino-acid polypeptide reads, in one-letter code: Magnesium-protoporphyrin O-methyltransferase (230 aa).

This sequence belongs to the class I-like SAM-binding methyltransferase superfamily. Magnesium protoporphyrin O-methyltransferase family.

The catalysed reaction is Mg-protoporphyrin IX + S-adenosyl-L-methionine = Mg-protoporphyrin IX 13-monomethyl ester + S-adenosyl-L-homocysteine. It participates in porphyrin-containing compound metabolism; chlorophyll biosynthesis (light-independent). Converts Mg-protoporphyrin IX to Mg-protoporphyrin IX methylester using S-adenosyl-L-methionine as a cofactor. The chain is Magnesium-protoporphyrin O-methyltransferase (chlM) from Synechocystis sp. (strain ATCC 27184 / PCC 6803 / Kazusa).